The chain runs to 693 residues: CREB-regulated transcription coactivator 2 (693 aa).

Over residues 1–20 (MATSGANGPGSATASASNPR) the composition is skewed to polar residues. Residues 1-30 (MATSGANGPGSATASASNPRKFSEKIALQK) form a disordered region. Ala2 carries the N-acetylalanine modification. Position 51 is an asymmetric dimethylarginine; by PRMT6 (Arg51). Phosphoserine occurs at positions 70, 86, and 90. 3 positions are modified to asymmetric dimethylarginine; by PRMT6: Arg99, Arg120, and Arg123. Ser136 is subject to Phosphoserine. 2 positions are modified to asymmetric dimethylarginine; by PRMT6: Arg161 and Arg168. Thr169 bears the Phosphothreonine mark. A Phosphoserine modification is found at Ser171. The segment covering 174 to 188 (ALHTSVMNPSPQDTY) has biased composition (polar residues). The segment at 174–210 (ALHTSVMNPSPQDTYPSPAAPSVLPSRRGGCLDGETD) is disordered. A required for interaction with COP1 region spans residues 209–215 (TDSKVPA). Lys234 is covalently cross-linked (Glycyl lysine isopeptide (Lys-Gly) (interchain with G-Cter in SUMO2)). Residues 271–287 (TGGSLPDLTNLHFPPPL) carry the Nuclear export signal motif. Disordered stretches follow at residues 271-307 (TGGSLPDLTNLHFPPPLPTPLDPEETAYPSLSGGSST), 335-463 (HSPL…SPTL), and 476-548 (KLPT…QSYH). Ser274 bears the Phosphoserine; by MARK2 mark. Position 306 is a phosphoserine (Ser306). Polar residues predominate over residues 339-351 (SHPSFQSSLSNPN). Composition is skewed to low complexity over residues 352–378 (LQASLSSPQPQLQGSHSHPSLPASSLA) and 386–424 (SLGHPSLSAPALSSSSSSSSASSPVLGAPAYPASAPGAS). Phosphoserine occurs at positions 368, 393, 433, and 456. Residues 447-463 (SQQQLPKQFSPTMSPTL) show a composition bias toward polar residues. Position 488 is a phosphotyrosine (Tyr488). A phosphoserine mark is found at Ser489 and Ser492. The residue at position 501 (Thr501) is a Phosphothreonine. Phosphoserine occurs at positions 613 and 624.

Belongs to the TORC family. In terms of assembly, binds, as a tetramer, through its N-terminal region, with the bZIP domain of CREB1. 'Arg-314' in the bZIP domain of CREB1 is essential for this interaction. Interaction, via its C-terminal, with TAF4, enhances recruitment of TAF4 to CREB1. Interacts with SIK2. Interacts with 14-3-3 proteins, YWHAB and YWHAG. Interacts (probably when phosphorylated at Ser-171) with YWHAE. Interacts with calmodulin-dependent catalytic subunit PPP3CA/calcineurin A. Interaction with COP1 mediates nuclear export and degradation of CRTC2. Post-translationally, phosphorylation/dephosphorylation states of Ser-171 are required for regulating transduction of CREB activity. CRTCs/TORCs are inactive when phosphorylated, and active when dephosphorylated at this site. This primary site of phosphorylation, is regulated by cAMP and calcium levels and is dependent on the phosphorylation of SIKs (SIK1 and SIK2) by LKB1. Following adenylyl cyclase activation, dephosphorylated at Ser-171 by PPP3CA/calcineurin A resulting in CRTC2 dissociation from 14-3-3 proteins and PPP3CA. Both insulin and AMPK increase this phosphorylation of CRTC2 while glucagon suppresses it. Phosphorylation at Ser-274 by MARK2 is induced under low glucose conditions and dephosphorylated in response to glucose influx. Phosphorylation at Ser-274 promotes interaction with 14-3-3 proteins and translocation to the cytoplasm. Asymmetric dimethylation of arginine resisues by PRMT6 enhances the association of CRTC2 with CREB on the promoters of gluconeogenic genes.

It is found in the cytoplasm. Its subcellular location is the nucleus. Transcriptional coactivator for CREB1 which activates transcription through both consensus and variant cAMP response element (CRE) sites. Acts as a coactivator, in the SIK/TORC signaling pathway, being active when dephosphorylated and acts independently of CREB1 'Ser-133' phosphorylation. Enhances the interaction of CREB1 with TAF4. Regulates gluconeogenesis as a component of the LKB1/AMPK/TORC2 signaling pathway. Regulates the expression of specific genes such as the steroidogenic gene, StAR. Potent coactivator of PPARGC1A and inducer of mitochondrial biogenesis in muscle cells. The protein is CREB-regulated transcription coactivator 2 (CRTC2) of Bos taurus (Bovine).